Consider the following 335-residue polypeptide: MFSRVRGFLSCQNYSHTATPAITLPSSGSANFAGVEYPLLPLDQHTPLLFQWFERNPSRFGENQIPIINTQQNPYLNNIINAAIIEKERTIGVLVDGNFSAGQKKALAKLEKQYENIKVIYNSDLDYSMYDKKLSDIYLENIAKIEAQPANVRDEYLLGEIKKSLNEVLKNNPEESLVSSHDKRLGHVRFDFYRNLFLLKGSNAFLEAGKHGCHHLQPGGGCIYLDADMLLTGKLGTLYLPDGIAVHVSRKGNSMSLENGIIAVNRSEHPALKKGLEIMHSKPYGDPYIDGVCGGLRHYFNCSIRHNYEEFCNFIEFKHEHIFMDTSSLTISSWR.

UDP-N-acetyl-alpha-D-glucosamine contacts are provided by residues 51–53 (QWF) and Tyr-75. Residues Arg-153 and Arg-184 are each glycosylated (N-beta-linked (GlcNAc) arginine; by autocatalysis). 224–227 (YLDA) lines the UDP-N-acetyl-alpha-D-glucosamine pocket. A DXD motif motif is present at residues 226–228 (DAD). Asp-228 lines the Mn(2+) pocket. Glu-258 serves as the catalytic Proton acceptor. An N-beta-linked (GlcNAc) arginine; by autocatalysis glycan is attached at Arg-305. Mn(2+)-binding residues include Asp-325 and Ser-327. Residues Ser-327 and 332–335 (SSWR) each bind UDP-N-acetyl-alpha-D-glucosamine. Arg-335 carries an N-beta-linked (GlcNAc) arginine; by autocatalysis glycan.

The protein belongs to the glycosyltransferase NleB family. As to quaternary structure, interacts with host TRIM32; without mediating its GlcNAcylation. It depends on Mn(2+) as a cofactor. Post-translationally, auto-glycosylated: arginine GlcNAcylation is required for activity toward death domain-containing host target proteins.

The protein localises to the secreted. It is found in the host Golgi apparatus. The catalysed reaction is L-arginyl-[protein] + UDP-N-acetyl-alpha-D-glucosamine = N(omega)-(N-acetyl-beta-D-glucosaminyl)-L-arginyl-[protein] + UDP + H(+). Its function is as follows. Protein-arginine N-acetylglucosaminyltransferase effector that disrupts TNF signaling in infected cells, including NF-kappa-B signaling and apoptosis. Acts by catalyzing the transfer of a single N-acetylglucosamine (GlcNAc) to a conserved arginine residue in the death domain of host proteins such as TRADD, TNFRSF1A/TNFR1 and TNFRSF10B/TRAILR2: arginine GlcNAcylation prevents homotypic/heterotypic death domain interactions and assembly of the oligomeric TNF-alpha receptor complex, thereby disrupting TNF signaling. Also acts on host proteins without a death domain: catalyzes arginine GlcNAcylation of host small Rab GTPase (Rab1, Rab5 and Rab11), thereby preventing GTPase activity and leading to impaired host vesicular protein transport. Also mediates auto-GlcNAcylation, which is required for activity toward death domain-containing host target proteins. This chain is Protein-arginine N-acetylglucosaminyltransferase SseK3, found in Salmonella typhimurium (strain SL1344).